The sequence spans 34 residues: uncharacterized protein (34 aa).

This is an uncharacterized protein from Acidianus two-tailed virus (ATV).